A 98-amino-acid polypeptide reads, in one-letter code: uncharacterized protein (98 aa).

Residues 53–98 are disordered; that stretch reads AALEGGRHRHRGESASGNGIQHGVPPNVALIPSGSTLLTPARSGHV.

This is an uncharacterized protein from Mycolicibacterium smegmatis (strain ATCC 700084 / mc(2)155) (Mycobacterium smegmatis).